A 500-amino-acid chain; its full sequence is MAFNLLNKDIDTLTCPALVVFSKSSSQKDKLAKVTHSEIHKALLPSLEEKTISGKHQETVVFREFSFKGFRHVIVVGLGKENEITHESVRQSMASAYEAIKALNVTEAAVHFDGITAGKKDAADFAKATAEGLILTSYVFNELMSGKKETKEINVHVVSKMGNDKAVKAAFNEGAILGSVVNFSRRLGDLPGNLMTPTILADSAVEGAKGIANLKVTVWDKARIKKEKMGGLLGVSNGSDQEPRFIIMEYKGAAASKKPVCFVGKGLTFDCGGISIKPGAGMEEMKYDMCGGANVIGTLLAIAKLKLKVNAVGLVASTENLINGSATKPGDVHTARNGKTFEVNNTDAEGRLILADALSYATELQPQMIVDAATLTGAMVIALGNTHTGYFTRNSALKTKVEKAAAESGEWVWNMPLTDFHVKDMKGTYADLSNISSGKGAGSATAAAFLEQFVGEGIPWAHFDIAGTGWAVGNRLPYCPKKGASGAMIRTFVEIAKQYT.

Positions 265 and 270 each coordinate Mn(2+). The active site involves lysine 277. Mn(2+) is bound by residues aspartate 288, aspartate 347, and glutamate 349. Arginine 351 is a catalytic residue.

It belongs to the peptidase M17 family. Requires Mn(2+) as cofactor.

It localises to the cytoplasm. It catalyses the reaction Release of an N-terminal amino acid, Xaa-|-Yaa-, in which Xaa is preferably Leu, but may be other amino acids including Pro although not Arg or Lys, and Yaa may be Pro. Amino acid amides and methyl esters are also readily hydrolyzed, but rates on arylamides are exceedingly low.. It carries out the reaction Release of an N-terminal amino acid, preferentially leucine, but not glutamic or aspartic acids.. Its function is as follows. Presumably involved in the processing and regular turnover of intracellular proteins. Catalyzes the removal of unsubstituted N-terminal amino acids from various peptides. The polypeptide is Probable cytosol aminopeptidase (Bdellovibrio bacteriovorus (strain ATCC 15356 / DSM 50701 / NCIMB 9529 / HD100)).